Consider the following 228-residue polypeptide: Thermonuclease (228 aa).

The first 23 residues, 1–23, serve as a signal peptide directing secretion; sequence MTEYLLSAGICMAIVSILLIGMA. A propeptide spanning residues 24-60 is cleaved from the precursor; that stretch reads ISNVSKGQYAKRFFFFATSCLVLTLVVVSSLSSSANA. Positions 58-70 are enriched in polar residues; it reads ANASQTDNGVNRS. A disordered region spans residues 58-83; the sequence is ANASQTDNGVNRSGSEDPTVYSATST. Position 100 (D100) interacts with Ca(2+). The active site involves R114. Residues D119 and T120 each coordinate Ca(2+). Residues E122 and R166 contribute to the active site.

The protein belongs to the thermonuclease family. It depends on Ca(2+) as a cofactor.

The protein localises to the secreted. The catalysed reaction is Endonucleolytic cleavage to nucleoside 3'-phosphates and 3'-phosphooligonucleotide end-products.. Its function is as follows. Enzyme that catalyzes the hydrolysis of both DNA and RNA at the 5' position of the phosphodiester bond. In Staphylococcus aureus (strain Mu50 / ATCC 700699), this protein is Thermonuclease (nuc).